Consider the following 96-residue polypeptide: Essential MCU regulator, mitochondrial (96 aa).

Residues 1-34 constitute a mitochondrion transit peptide; sequence MIVSRLTFPLQAAKLVARKAAGNPSNSIIQRRHM. Residues 52-72 form a helical membrane-spanning segment; that stretch reads PFGLFAIFCAVIPGLFIGATI.

This sequence belongs to the SMDT1/EMRE family.

The protein resides in the mitochondrion inner membrane. Its function is as follows. Essential regulatory subunit of the mitochondrial calcium uniporter (mcu) channel, a protein that mediates calcium uptake into mitochondria. The protein is Essential MCU regulator, mitochondrial of Drosophila pseudoobscura pseudoobscura (Fruit fly).